The following is a 187-amino-acid chain: Elongation factor P (187 aa).

This sequence belongs to the elongation factor P family.

It is found in the cytoplasm. Its pathway is protein biosynthesis; polypeptide chain elongation. Its function is as follows. Involved in peptide bond synthesis. Stimulates efficient translation and peptide-bond synthesis on native or reconstituted 70S ribosomes in vitro. Probably functions indirectly by altering the affinity of the ribosome for aminoacyl-tRNA, thus increasing their reactivity as acceptors for peptidyl transferase. The protein is Elongation factor P (efp) of Treponema pallidum (strain Nichols).